The sequence spans 379 residues: Protein COS2 (379 aa).

Residues 1–72 are Cytoplasmic-facing; it reads MKENELKNEK…WKLSNNCIYP (72 aa). Residues 73-93 traverse the membrane as a helical segment; sequence LIVSLLVLFLGPIFVLVICGL. The Extracellular portion of the chain corresponds to 94 to 254; that stretch reads SRKRSLSKQL…FLCCIYVSRG (161 aa). A helical transmembrane segment spans residues 255–275; that stretch reads MCLLLRTLYLGWILFMLVQGF. Over 276–379 the chain is Cytoplasmic; it reads QNIRVLIMSM…QLSRSEVLLV (104 aa).

This sequence belongs to the DUP/COS family.

It localises to the membrane. This chain is Protein COS2 (COS2), found in Saccharomyces cerevisiae (strain ATCC 204508 / S288c) (Baker's yeast).